A 221-amino-acid polypeptide reads, in one-letter code: Protein-L-isoaspartate O-methyltransferase (221 aa).

Residue serine 57 is part of the active site.

This sequence belongs to the methyltransferase superfamily. L-isoaspartyl/D-aspartyl protein methyltransferase family.

It localises to the cytoplasm. The enzyme catalyses [protein]-L-isoaspartate + S-adenosyl-L-methionine = [protein]-L-isoaspartate alpha-methyl ester + S-adenosyl-L-homocysteine. In terms of biological role, catalyzes the methyl esterification of L-isoaspartyl residues in peptides and proteins that result from spontaneous decomposition of normal L-aspartyl and L-asparaginyl residues. It plays a role in the repair and/or degradation of damaged proteins. The protein is Protein-L-isoaspartate O-methyltransferase of Korarchaeum cryptofilum (strain OPF8).